The primary structure comprises 329 residues: Phenylalanine--tRNA ligase alpha subunit (329 aa).

The protein belongs to the class-II aminoacyl-tRNA synthetase family. Phe-tRNA synthetase alpha subunit type 1 subfamily. In terms of assembly, tetramer of two alpha and two beta subunits. It depends on Mg(2+) as a cofactor.

Its subcellular location is the cytoplasm. It carries out the reaction tRNA(Phe) + L-phenylalanine + ATP = L-phenylalanyl-tRNA(Phe) + AMP + diphosphate + H(+). The polypeptide is Phenylalanine--tRNA ligase alpha subunit (pheS) (Buchnera aphidicola subsp. Acyrthosiphon pisum (strain APS) (Acyrthosiphon pisum symbiotic bacterium)).